Here is a 116-residue protein sequence, read N- to C-terminus: Beta-D-galactosidase Rv1717 (116 aa).

The Cupin type-2 domain occupies 40 to 107 (LSVYRPGGTA…TDRQALLLVT (68 aa)).

It is found in the secreted. Its subcellular location is the cell wall. The enzyme catalyses Hydrolysis of terminal non-reducing beta-D-galactose residues in beta-D-galactosides.. With respect to regulation, beta-galactosidase activity is activated by Mg(2+) and significantly inhibited by Ca(2+), Cd(2+), Fe(2+), Ni(2+), Cu(2+) and Zn(2+). Inhibited by EDTA. In terms of biological role, beta-D-galactopyranosidase that specifically recognizes the beta-glycosidic bonds formed with beta-D-galactopyranose (beta-D-Gal) or N-acetylgalactosamine (beta-D-GalNAc). May target the galactoside linkages in the exopolysaccharide component of the mycobacterial extracellular polymeric substance (EPS) and help dispersal of Mtb bacteria from a deteriorating biofilm. This Mycobacterium tuberculosis (strain ATCC 25618 / H37Rv) protein is Beta-D-galactosidase Rv1717.